The chain runs to 275 residues: Large ribosomal subunit protein uL2 (275 aa).

Residues Gly210–Lys275 are disordered. Positions Phe257 to Lys275 are enriched in basic residues.

This sequence belongs to the universal ribosomal protein uL2 family. Part of the 50S ribosomal subunit. Forms a bridge to the 30S subunit in the 70S ribosome.

Functionally, one of the primary rRNA binding proteins. Required for association of the 30S and 50S subunits to form the 70S ribosome, for tRNA binding and peptide bond formation. It has been suggested to have peptidyltransferase activity; this is somewhat controversial. Makes several contacts with the 16S rRNA in the 70S ribosome. The sequence is that of Large ribosomal subunit protein uL2 from Helicobacter hepaticus (strain ATCC 51449 / 3B1).